The chain runs to 1001 residues: X-linked retinitis pigmentosa GTPase regulator (1001 aa).

RCC1 repeat units lie at residues 54-105 (NKLY…STDT), 106-158 (GGVY…LTED), 159-208 (GKLF…VTMD), 209-261 (GELY…LTEK), 262-313 (VVYA…MTEL), and 314-367 (GLLY…FATP). The interval 404–428 (SLSARLRRRERERPPCSASMVGTLP) is disordered. Position 518 is a phosphoserine (Ser518). Composition is skewed to basic and acidic residues over residues 631-641 (KKIRESEENSK) and 659-671 (EDNKDIAEERRSS). Disordered stretches follow at residues 631 to 738 (KKIR…WYDR), 794 to 869 (NLEF…EGSE), 902 to 925 (PKGHMYDRVKSSSSEILGGNDPTS), and 962 to 1001 (GDQIALQSDKKDANQNHMGQNLQDSTTPNMEGKSKSCTIL). 2 stretches are compositionally biased toward acidic residues: residues 679–691 (SETELVEEPDSYM) and 717–731 (EKDEKDEKDDDEVET). 3 stretches are compositionally biased toward basic and acidic residues: residues 794–818 (NLEFEGDRKEAKAEAPSDVITEKEA), 847–857 (EERKEGEKEIV), and 902–911 (PKGHMYDRVK). The segment covering 976–1001 (QNHMGQNLQDSTTPNMEGKSKSCTIL) has biased composition (polar residues). Cys998 is subject to Cysteine methyl ester. Residue Cys998 is the site of S-geranylgeranyl cysteine attachment. Residues 999-1001 (TIL) constitute a propeptide, removed in mature form.

Interacts with SPATA7. Interacts with PDE6D. Interacts with RPGRIP1 and RPGRIP1L; PDE6D, RPGRIP1 and RPGRIP1L may compete for the same binding sites. Interacts with NPM1. Interacts with PDE6D. Isoform 5 interacts (via N-terminus) with SMC1A and SMC3. Isoform 5 interacts with CEP290. Interacts with WHRN. Interacts with RAB37 and RAB8A (in GDP-bound forms); functions as GEF for RAB37 and RAB8A. Post-translationally, prenylated. As to expression, expressed in the retina (at protein level). Located mainly in the connecting cilia between the outer segment and inner segment and also observed in the outer plexiform layer, inner plexiform layer, and ganglion cell layer of the retinas. Isoform 1: Expressed in the retina (at protein level). Isoform 5: Expressed in the retina (at protein level). Expressed in the brain. Expressed in the testis (at protein level). Expressed in kidney (at protein level).

The protein localises to the golgi apparatus. It localises to the cytoplasm. Its subcellular location is the cytoskeleton. It is found in the microtubule organizing center. The protein resides in the centrosome. The protein localises to the cell projection. It localises to the cilium. Its subcellular location is the cilium basal body. It is found in the cilium axoneme. The protein resides in the flagellum axoneme. Its function is as follows. Acts as a guanine-nucleotide releasing factor (GEF) for RAB8A and RAB37 by promoting the conversion of inactive RAB-GDP to the active form RAB-GTP. GEF activity towards RAB8A may facilitate ciliary trafficking by modulating ciliary intracellular localization of RAB8A. GEF activity towards RAB37 maintains autophagic homeostasis and retinal function. Involved in photoreceptor integrity. May control cilia formation by regulating actin stress filaments and cell contractility. May be involved in microtubule organization and regulation of transport in primary cilia. Isoform 5 may play a critical role in spermatogenesis and in intraflagellar transport processes. The polypeptide is X-linked retinitis pigmentosa GTPase regulator (Mus musculus (Mouse)).